The chain runs to 728 residues: Catalase-peroxidase (728 aa).

Positions 1–26 (MDNPTDTAGKCPVAHGNKPRGPSNRD) are disordered. The segment at residues 96–218 (WHSAGTYRIT…LGAVQMGLIY (123 aa)) is a cross-link (tryptophyl-tyrosyl-methioninium (Trp-Tyr) (with M-244)). The active-site Proton acceptor is the H97. Residues 218–244 (YVNPEGPGGNPDPLASARDIRETFARM) constitute a cross-link (tryptophyl-tyrosyl-methioninium (Tyr-Met) (with W-96)). H259 contributes to the heme b binding site.

The protein belongs to the peroxidase family. Peroxidase/catalase subfamily. Homodimer or homotetramer. Heme b serves as cofactor. In terms of processing, formation of the three residue Trp-Tyr-Met cross-link is important for the catalase, but not the peroxidase activity of the enzyme.

It catalyses the reaction H2O2 + AH2 = A + 2 H2O. The catalysed reaction is 2 H2O2 = O2 + 2 H2O. In terms of biological role, bifunctional enzyme with both catalase and broad-spectrum peroxidase activity. The sequence is that of Catalase-peroxidase from Rhizobium etli (strain CIAT 652).